The following is a 426-amino-acid chain: Serine--tRNA ligase (426 aa).

Positions 36 to 66 are disordered; sequence KRRHLQERTQDLQSQRNTISKEIGQKKAKGE. Over residues 46–55 the composition is skewed to polar residues; it reads DLQSQRNTIS. An L-serine-binding site is contributed by 233 to 235; it reads TAE. 264–266 serves as a coordination point for ATP; sequence RSE. An L-serine-binding site is contributed by glutamate 287. An ATP-binding site is contributed by 351-354; the sequence is EISS. Serine 387 lines the L-serine pocket.

This sequence belongs to the class-II aminoacyl-tRNA synthetase family. Type-1 seryl-tRNA synthetase subfamily. As to quaternary structure, homodimer. The tRNA molecule binds across the dimer.

The protein resides in the cytoplasm. It catalyses the reaction tRNA(Ser) + L-serine + ATP = L-seryl-tRNA(Ser) + AMP + diphosphate + H(+). The enzyme catalyses tRNA(Sec) + L-serine + ATP = L-seryl-tRNA(Sec) + AMP + diphosphate + H(+). It participates in aminoacyl-tRNA biosynthesis; selenocysteinyl-tRNA(Sec) biosynthesis; L-seryl-tRNA(Sec) from L-serine and tRNA(Sec): step 1/1. Catalyzes the attachment of serine to tRNA(Ser). Is also able to aminoacylate tRNA(Sec) with serine, to form the misacylated tRNA L-seryl-tRNA(Sec), which will be further converted into selenocysteinyl-tRNA(Sec). In Francisella tularensis subsp. novicida (strain U112), this protein is Serine--tRNA ligase.